Consider the following 280-residue polypeptide: uncharacterized protein (280 aa).

The signal sequence occupies residues 1-35 (MQGQVLKKVLKKYVHIGMCTLFLHAILLFPCVAQA).

This is an uncharacterized protein from Treponema pallidum (strain Nichols).